The chain runs to 89 residues: Putative antitoxin VapB42 (89 aa).

Possibly the antitoxin component of a type II toxin-antitoxin (TA) system. Its cognate toxin is VapC42 (Potential). This is Putative antitoxin VapB42 (vapB42) from Mycobacterium tuberculosis (strain CDC 1551 / Oshkosh).